The primary structure comprises 872 residues: Valine--tRNA ligase (872 aa).

A 'HIGH' region motif is present at residues 45–55 (PYPTGNLHIGN). Positions 524–528 (KMSKS) match the 'KMSKS' region motif. Lys-527 lines the ATP pocket.

This sequence belongs to the class-I aminoacyl-tRNA synthetase family. ValS type 2 subfamily.

It localises to the cytoplasm. It catalyses the reaction tRNA(Val) + L-valine + ATP = L-valyl-tRNA(Val) + AMP + diphosphate. Its function is as follows. Catalyzes the attachment of valine to tRNA(Val). As ValRS can inadvertently accommodate and process structurally similar amino acids such as threonine, to avoid such errors, it has a 'posttransfer' editing activity that hydrolyzes mischarged Thr-tRNA(Val) in a tRNA-dependent manner. In Natronomonas pharaonis (strain ATCC 35678 / DSM 2160 / CIP 103997 / JCM 8858 / NBRC 14720 / NCIMB 2260 / Gabara) (Halobacterium pharaonis), this protein is Valine--tRNA ligase.